A 470-amino-acid chain; its full sequence is Arginine ADP-riboxanase OspC1 (470 aa).

NAD(+) contacts are provided by His-138, Gln-139, Ser-140, Leu-144, Ile-157, Asn-167, Phe-183, His-201, Phe-206, Asp-226, and Glu-320. Glu-320 is a catalytic residue. 3 ANK repeats span residues 363-392 (IALQALFLSITNQKEDVALYILSNFEITRQ), 399-431 (HELYDIEYLLSAHNSSCKVLEYFINKGLVDVNT), and 438-467 (SGDCMLDNAIKYENAEMIKLLLKYGATSDN).

It belongs to the OspC family. Interacts with host calmodulin (CALM1, CALM2 and/or CALM3); specifically interacts with the apo form of calmodulin, preventing calcium-binding.

The protein localises to the secreted. The protein resides in the host nucleus. It catalyses the reaction L-arginyl-[protein] + NAD(+) = ADP-riboxanated L-argininyl-[protein] + nicotinamide + NH4(+) + H(+). In terms of biological role, ADP-riboxanase effector that mediates arginine ADP-riboxanation of host caspases. ADP-riboxanation of host apoptotic caspases (CASP3, CASP8 and CASP9) prevents their activation, thereby inhibiting host cell extrinsic and intrinsic apoptosis. Does not catalyze ADP-riboxanation of host CASP4/CASP11. Independently of its ADP-riboxanase activity, acts as an inhibitor of calcium signaling by inhibiting host calmodulin, preventing activation of the JAK-STAT signaling pathway in response to interferon-beta. Mechanistically, acts by binding to the apo form of calmodulin, preventing calcium-binding and ability to activate host CaMK2 (CAMKII), which is required to stimulate the JAK-STAT signaling pathway in response to interferon-beta. The protein is Arginine ADP-riboxanase OspC1 of Shigella flexneri.